A 201-amino-acid chain; its full sequence is Large ribosomal subunit protein uL4 (201 aa).

A disordered region spans residues arginine 44 to glycine 71.

This sequence belongs to the universal ribosomal protein uL4 family. Part of the 50S ribosomal subunit.

Functionally, one of the primary rRNA binding proteins, this protein initially binds near the 5'-end of the 23S rRNA. It is important during the early stages of 50S assembly. It makes multiple contacts with different domains of the 23S rRNA in the assembled 50S subunit and ribosome. Its function is as follows. Forms part of the polypeptide exit tunnel. The polypeptide is Large ribosomal subunit protein uL4 (Enterobacter sp. (strain 638)).